The primary structure comprises 198 residues: Proteasome subunit beta type-4 (198 aa).

N-acetylmethionine is present on Met-1. Ser-76 is modified (phosphoserine).

It belongs to the peptidase T1B family. As to quaternary structure, the 26S proteasome consists of a 20S proteasome core and two 19S regulatory subunits. The 20S proteasome core is composed of 28 subunits that are arranged in four stacked rings, resulting in a barrel-shaped structure. The two end rings are each formed by seven alpha subunits, and the two central rings are each formed by seven beta subunits. The catalytic chamber with the active sites is on the inside of the barrel.

The protein resides in the cytoplasm. The protein localises to the nucleus. Its function is as follows. Non-catalytic component of the proteasome which degrades poly-ubiquitinated proteins in the cytoplasm and in the nucleus. It is essential for the regulated turnover of proteins and for the removal of misfolded proteins. The proteasome is a multicatalytic proteinase complex that is characterized by its ability to cleave peptides with Arg, Phe, Tyr, Leu, and Glu adjacent to the leaving group at neutral or slightly basic pH. It has an ATP-dependent proteolytic activity. This subunit has a chymotrypsin-like activity. This chain is Proteasome subunit beta type-4 (PRE1), found in Saccharomyces cerevisiae (strain ATCC 204508 / S288c) (Baker's yeast).